A 424-amino-acid chain; its full sequence is Kynurenine--oxoglutarate transaminase 1 (424 aa).

Gly-36 is a substrate binding site. Position 82 is an N6-succinyllysine (Lys-82). Position 185 (Asn-185) interacts with substrate. Lys-247 is modified (N6-(pyridoxal phosphate)lysine). Position 398 (Arg-398) interacts with substrate. Lys-413 carries the N6-succinyllysine modification.

This sequence belongs to the class-I pyridoxal-phosphate-dependent aminotransferase family. As to quaternary structure, homodimer. It depends on pyridoxal 5'-phosphate as a cofactor.

It localises to the cytoplasm. The protein resides in the cytosol. It catalyses the reaction L-kynurenine + 2-oxoglutarate = kynurenate + L-glutamate + H2O. It carries out the reaction 3-phenylpyruvate + L-glutamine = 2-oxoglutaramate + L-phenylalanine. The catalysed reaction is an S-substituted L-cysteine + H2O = a thiol + pyruvate + NH4(+). Its pathway is amino-acid degradation; L-kynurenine degradation; kynurenate from L-kynurenine: step 1/2. Its function is as follows. Catalyzes the irreversible transamination of the L-tryptophan metabolite L-kynurenine to form kynurenic acid (KA), an intermediate in the tryptophan catabolic pathway which is also a broad spectrum antagonist of the three ionotropic excitatory amino acid receptors among others. Metabolizes the cysteine conjugates of certain halogenated alkenes and alkanes to form reactive metabolites. Catalyzes the beta-elimination of S-conjugates and Se-conjugates of L-(seleno)cysteine, resulting in the cleavage of the C-S or C-Se bond. This is Kynurenine--oxoglutarate transaminase 1 (Kyat1) from Mus musculus (Mouse).